Consider the following 592-residue polypeptide: Aspartate--tRNA(Asp/Asn) ligase (592 aa).

Glu173 provides a ligand contact to L-aspartate. Residues 197 to 200 (QLFK) are aspartate. Arg219 is an L-aspartate binding site. Residues 219–221 (RDE) and Gln228 each bind ATP. Residue His448 participates in L-aspartate binding. Glu481 contributes to the ATP binding site. Arg488 provides a ligand contact to L-aspartate. An ATP-binding site is contributed by 533-536 (GLDR).

The protein belongs to the class-II aminoacyl-tRNA synthetase family. Type 1 subfamily. Homodimer.

It is found in the cytoplasm. It carries out the reaction tRNA(Asx) + L-aspartate + ATP = L-aspartyl-tRNA(Asx) + AMP + diphosphate. Its function is as follows. Aspartyl-tRNA synthetase with relaxed tRNA specificity since it is able to aspartylate not only its cognate tRNA(Asp) but also tRNA(Asn). Reaction proceeds in two steps: L-aspartate is first activated by ATP to form Asp-AMP and then transferred to the acceptor end of tRNA(Asp/Asn). In Chromohalobacter salexigens (strain ATCC BAA-138 / DSM 3043 / CIP 106854 / NCIMB 13768 / 1H11), this protein is Aspartate--tRNA(Asp/Asn) ligase.